The primary structure comprises 300 residues: Shikimate kinase, chloroplastic (300 aa).

The transit peptide at 1–65 (MEARVSQSLQ…SDRRVQLKVS (65 aa)) directs the protein to the chloroplast. 111-118 (GMMGCGKT) lines the ATP pocket. Thr118 serves as a coordination point for Mg(2+). Substrate contacts are provided by Asp136, Arg161, and Gly183. Residue Arg222 coordinates ATP.

This sequence belongs to the shikimate kinase family. It depends on Mg(2+) as a cofactor.

Its subcellular location is the plastid. The protein localises to the chloroplast. The catalysed reaction is shikimate + ATP = 3-phosphoshikimate + ADP + H(+). It functions in the pathway metabolic intermediate biosynthesis; chorismate biosynthesis; chorismate from D-erythrose 4-phosphate and phosphoenolpyruvate: step 5/7. Its function is as follows. Catalyzes the specific phosphorylation of the 3-hydroxyl group of shikimic acid using ATP as a cosubstrate. The polypeptide is Shikimate kinase, chloroplastic (SK) (Solanum lycopersicum (Tomato)).